The following is a 313-amino-acid chain: Monoglyceride lipase (313 aa).

A GXSXG motif is present at residues 121 to 125 (GHSMG). Serine 123 serves as the catalytic Nucleophile. Residues aspartate 251 and histidine 281 each act as charge relay system in the active site.

Belongs to the AB hydrolase superfamily. Monoacylglycerol lipase family.

It is found in the lipid droplet. Its subcellular location is the cytoplasm. The protein resides in the endoplasmic reticulum. The protein localises to the mitochondrion outer membrane. It catalyses the reaction Hydrolyzes glycerol monoesters of long-chain fatty acids.. It carries out the reaction a fatty acid ethyl ester + H2O = ethanol + a fatty acid + H(+). The catalysed reaction is 1-(9Z-octadecenoyl)-glycerol + H2O = glycerol + (9Z)-octadecenoate + H(+). The enzyme catalyses 2-(9Z-octadecenoyl)-glycerol + H2O = glycerol + (9Z)-octadecenoate + H(+). It catalyses the reaction 1-hexadecanoylglycerol + H2O = glycerol + hexadecanoate + H(+). It carries out the reaction 2-hexadecanoylglycerol + H2O = glycerol + hexadecanoate + H(+). The catalysed reaction is ethyl hexadecanoate + H2O = ethanol + hexadecanoate + H(+). The enzyme catalyses ethyl (9Z)-octadecenoate + H2O = ethanol + (9Z)-octadecenoate + H(+). It catalyses the reaction ethyl (9Z)-hexadecenoate + H2O = (9Z)-hexadecenoate + ethanol + H(+). It carries out the reaction ethyl octadecanoate + H2O = ethanol + octadecanoate + H(+). It functions in the pathway glycerolipid metabolism; triacylglycerol degradation. Its function is as follows. Converts monoacylglycerides (MAG) to free fatty acids and glycerol. Has a strong preference for monounsaturated monoglycerides. Required for efficient degradation of MAG, short-lived intermediates of glycerolipid metabolism which may also function as lipid signaling molecules. Controls inactivation of the signaling lipid N-palmitoylethanolamine (PEA). Involved in fatty acid ethyl ester (FAEE) catabolism. FAEEs are non-oxidative metabolites of ethanol that are transiently incorporated into lipid droplets (LDs). Their mobilization by LD-resident FAEE hydrolases facilitates a controlled metabolism of these potentially toxic lipid metabolites. This is Monoglyceride lipase (YJU3) from Saccharomyces cerevisiae (strain ATCC 204508 / S288c) (Baker's yeast).